The primary structure comprises 611 residues: MRFQGVGLCLGLLFITVNADFMDDGVEVEDFSENSDESNIKDEPSSGTFKYKTPQPIGEVYFTETFDSGNLAGWVLSKAKKDDMDSEIAIYDGRWEIEELKENQVPGDRGLVLKSKAKHHAIAAVLEKPFIFADKPLIVQYEVNFQDGIDCGGAYIKLLADTGDLILENFYDKTSYTIMFGPDKCGEDYKLHLIFRHKHPKTGVFEEKHAKPPDVDLKEFFTDRKTHLYTLVMNPDDTFEVLIDQKVVNQGTLLDDVVPPINPPREIDDPSDKKPEEWDDRAKIPDPTAVRPEDWDENEPAQIEDSSAVKPDGWLDDEPKFIPNPKAEKPEDWSDDMDGEWEAPHIPNPACQIGCGEWKPPMIDNPKYKGIWRPPMINNPNYQGLWSPQKIPNPDYFEDDHPFLLTSFSALGLELWSMTPDIYFDNFIICSEKEVADQWATDGWELKIMVANANEPGVLRQLVIAAEERPWLWLMYLVMAGLPVALVASFCWPRKVKKKYEDTGPKKTELCKLQSKAALEQEAEEEKAPEKPEDVQEEKKPGEAEVVTVEKEVIGEPEEKSKEDRETLEGQEEVSKLSKSGSEDEMKDADESPGSGDAPLKSLRKRRVRKD.

A signal peptide spans 1–19 (MRFQGVGLCLGLLFITVNA). The Lumenal segment spans residues 20-471 (DFMDDGVEVE…LVIAAEERPW (452 aa)). An N6-acetyllysine modification is found at Lys-128. Cys-151 and Cys-185 are oxidised to a cystine. Positions 254 to 335 (LDDVVPPINP…KAEKPEDWSD (82 aa)) are disordered. The segment covering 265-284 (REIDDPSDKKPEEWDDRAKI) has biased composition (basic and acidic residues). A run of 8 repeats spans residues 267 to 280 (IDDPSDKKPEEWDD), 284 to 297 (IPDPTAVRPEDWDE), 303 to 316 (IEDSSAVKPDGWLD), 322 to 335 (IPNPKAEKPEDWSD), 339 to 352 (GEWEAPHIPNPACQ), 356 to 369 (GEWKPPMIDNPKYK), 370 to 383 (GIWRPPMINNPNYQ), and 384 to 397 (GLWSPQKIPNPDYF). The tract at residues 317-350 (DEPKFIPNPKAEKPEDWSDDMDGEWEAPHIPNPA) is interaction with PPIB. A disulfide bridge links Cys-351 with Cys-355. A helical transmembrane segment spans residues 472 to 492 (LWLMYLVMAGLPVALVASFCW). The Cytoplasmic portion of the chain corresponds to 493 to 611 (PRKVKKKYED…SLRKRRVRKD (119 aa)). The disordered stretch occupies residues 517–611 (AALEQEAEEE…SLRKRRVRKD (95 aa)). Over residues 526 to 584 (EKAPEKPEDVQEEKKPGEAEVVTVEKEVIGEPEEKSKEDRETLEGQEEVSKLSKSGSED) the composition is skewed to basic and acidic residues. A phosphoserine mark is found at Ser-561, Ser-578, Ser-580, Ser-582, Ser-592, Ser-595, and Ser-602. Residues 602–611 (SLRKRRVRKD) are compositionally biased toward basic residues.

This sequence belongs to the calreticulin family. In terms of assembly, interacts with PDILT and PPIB. Interacts with ADAM2. Interacts with ADAM1A, ADAM1B and ADAM3; these are protein-coding genes in mouse but may be pseudogenes in other organisms. Detected in testis (at protein level). Detected in testis.

The protein resides in the endoplasmic reticulum membrane. Functionally, functions during spermatogenesis as a chaperone for a range of client proteins that are important for sperm adhesion onto the egg zona pellucida and for subsequent penetration of the zona pellucida. Required for normal sperm migration from the uterus into the oviduct. Required for normal male fertility. Binds calcium ions. This Mus musculus (Mouse) protein is Calmegin (Clgn).